A 246-amino-acid polypeptide reads, in one-letter code: Large ribosomal subunit protein uL30 (246 aa).

Met-1 is subject to N-acetylmethionine. Tandem repeats lie at residues Lys-7–Leu-17, Lys-18–Ala-28, Lys-29–Phe-40, and Arg-41–Ala-52. Residues Lys-7–Ala-52 are 4 X 12 AA tandem repeats.

This sequence belongs to the universal ribosomal protein uL30 family. As to quaternary structure, component of the large ribosomal subunit.

The protein resides in the cytoplasm. In terms of biological role, component of the large ribosomal subunit. The ribosome is a large ribonucleoprotein complex responsible for the synthesis of proteins in the cell. Binds to G-rich structures in 28S rRNA and in mRNAs. Plays a regulatory role in the translation apparatus; inhibits cell-free translation of mRNAs. The sequence is that of Large ribosomal subunit protein uL30 (RPL7) from Gallus gallus (Chicken).